The primary structure comprises 442 residues: MALPSAFLNPFVPSPVTANPRTKFARVGKGFNVSCLIKTEQTKSAVTETGVSPATKEVNEPSLSTVLVNYSADWDPYNATSTPIYQTATFKMKSATEFGEYYYSRNANPTRHTLEALLAQIDNAKFAYCFSSGMTALTSVCELVSPGDEIVTVEDIYGGSYNFINNLIGRKEGIVVKHVNTSDLDEVKRNMSNKTKLVWLESPSNPQLRVSDIRSIAKIAHAYGAILFIDNSVMSPVLSNPLDLGADIVMHSATKFIAGNSSCIGGSIATNNEELGNKIHSFQKATGCALSPKDSWICLEGIKTMALRVQEKQRNAQLIAEFLASHPKVTEISYPGLQSDPGYELHNSQSKGPGSVISFKTGSLPLSKQIVEDTKYFSMTVSFGGVGSCICLPWYTSHSSIPDSQKLKVGLTRDLVRLSVGIEDVEDLVMDLQNVLSIQPQF.

Residues 1–35 (MALPSAFLNPFVPSPVTANPRTKFARVGKGFNVSC) constitute a chloroplast transit peptide. Pyridoxal 5'-phosphate is bound by residues Tyr-103, Arg-105, Gly-133, Met-134, Ser-252, and Thr-254. Residue Lys-255 is modified to N6-(pyridoxal phosphate)lysine.

This sequence belongs to the trans-sulfuration enzymes family. As to quaternary structure, forms homodimers. May form homotetramers from two homodimers. Pyridoxal 5'-phosphate is required as a cofactor.

Its subcellular location is the plastid. The protein localises to the chloroplast. It carries out the reaction L-mimosine + H2O = 3-hydroxy-4H-pyrid-4-one + pyruvate + NH4(+). The catalysed reaction is L,L-cystathionine + H2O = L-homocysteine + pyruvate + NH4(+). The enzyme catalyses an S-substituted L-cysteine + H2O = a thiol + pyruvate + NH4(+). Functionally, catalyzes the degradation of mimosine, which is a toxic secondary metabolite found in all Mimosa and Leucaena species. Catalyzes the degradation of cystathionine, but seems to have lower preference toward cystathionine over mimosine. The protein is Mimosinase, chloroplastic of Mimosa pudica (Sensitive plant).